The chain runs to 113 residues: uncharacterized protein (113 aa).

Residues 78 to 113 are disordered; the sequence is YCNRGSERTNQGNRGSAPSKILLPRTIADPFRGGPE.

This is an uncharacterized protein from Halobacterium phage phiH (Bacteriophage phi-H).